Consider the following 1241-residue polypeptide: eIF-2-alpha kinase GCN2 (1241 aa).

Basic residues predominate over residues 1 to 15 (MGRSSSKKKKKRGGS). The interval 1 to 33 (MGRSSSKKKKKRGGSGRRGQLKDHGSNADEDNE) is disordered. The region spanning 37-148 (EEITALSAIF…EAAQEFLSEI (112 aa)) is the RWD domain. The disordered stretch occupies residues 253–321 (PIAKLNTVQE…SLGSWSSDSL (69 aa)). 2 stretches are compositionally biased toward low complexity: residues 267–276 (DTSISSFDSS) and 307–321 (NSES…SDSL). A Protein kinase domain is found at 425–731 (FEELKPLGQG…ATELLKHAFP (307 aa)). ATP contacts are provided by residues 431–439 (LGQGGFGHV) and lysine 454. Aspartate 586 acts as the Proton acceptor in catalysis. Positions 819-1219 (IPMRLLSDCP…ELKKEKVVGR (401 aa)) are histidyl-tRNA synthetase-like.

It belongs to the protein kinase superfamily. Ser/Thr protein kinase family. GCN2 subfamily. In terms of assembly, homodimer; homodimerization is important for kinase activation by uncharged tRNAs. Expressed in roots, leaves, stems, buds, flowers, siliques and seedlings.

It localises to the cytoplasm. It carries out the reaction L-seryl-[protein] + ATP = O-phospho-L-seryl-[protein] + ADP + H(+). It catalyses the reaction L-threonyl-[protein] + ATP = O-phospho-L-threonyl-[protein] + ADP + H(+). With respect to regulation, the kinase activity is stimulated upon binding to uncharged tRNAs. Its function is as follows. Metabolic-stress sensing protein kinase that phosphorylates the alpha subunit of eukaryotic translation initiation factor 2 eIF-2-alpha in response to low amino acid availability. Plays a role as an activator of the general amino acid control pathway required for adapatation to amino acid starvation. Converts phosphorylated eIF-2-alpha either to a competitive inhibitor of translation initiation, leading to a global protein synthesis repression, and thus to a reduced overall utilization of amino acids, or to a translational initiation activation of specific mRNAs, and hence allowing reprogramming of amino acid biosynthetic gene expression to alleviate nutrient depletion. Binds uncharged tRNAs. In Arabidopsis thaliana (Mouse-ear cress), this protein is eIF-2-alpha kinase GCN2.